We begin with the raw amino-acid sequence, 235 residues long: MPKYYCEYCDIYLTHSSPVGRRQHIHGRKHISAKIEYFQNLLREEGITPQNFLGFLNNRNINNPLGNPMMNYMNPNMYMKYNPMKSYHSYSMRSSHPYRLNIHNNKYSRAGYVPPSHHKYSVNPMHNNYHQAHNNYSYPNSINPSNQINYSNNYGSNNFNNSNEFNKNMNEKDNINNNDIHDNKVKTDENDPINNDNLNNTRNFSYEENHYSTDHKKPSFLNPENSKEHIESDIS.

The segment at 4–36 (YYCEYCDIYLTHSSPVGRRQHIHGRKHISAKIE) adopts a Matrin-type zinc-finger fold. The disordered stretch occupies residues 131–235 (QAHNNYSYPN…SKEHIESDIS (105 aa)). A compositionally biased stretch (low complexity) spans 134 to 168 (NNYSYPNSINPSNQINYSNNYGSNNFNNSNEFNKN). Positions 169–189 (MNEKDNINNNDIHDNKVKTDE) are enriched in basic and acidic residues. Over residues 192-203 (PINNDNLNNTRN) the composition is skewed to low complexity. Basic and acidic residues-rich tracts occupy residues 205 to 217 (SYEENHYSTDHKK) and 225 to 235 (NSKEHIESDIS).

This sequence belongs to the U1 small nuclear ribonucleoprotein C family. In terms of assembly, U1 snRNP is composed of the 7 core Sm proteins B/B', D1, D2, D3, E, F and G that assemble in a heptameric protein ring on the Sm site of the small nuclear RNA to form the core snRNP, and at least 3 U1 snRNP-specific proteins U1-70K, U1-A and U1-C. U1-C interacts with U1 snRNA and the 5' splice-site region of the pre-mRNA.

Its subcellular location is the nucleus. Its function is as follows. Component of the spliceosomal U1 snRNP, which is essential for recognition of the pre-mRNA 5' splice-site and the subsequent assembly of the spliceosome. U1-C is directly involved in initial 5' splice-site recognition for both constitutive and regulated alternative splicing. The interaction with the 5' splice-site seems to precede base-pairing between the pre-mRNA and the U1 snRNA. Stimulates commitment or early (E) complex formation by stabilizing the base pairing of the 5' end of the U1 snRNA and the 5' splice-site region. This Plasmodium falciparum (isolate 3D7) protein is U1 small nuclear ribonucleoprotein C.